The primary structure comprises 119 residues: Small ribosomal subunit protein uS13 (119 aa).

Residues 96–119 (PVRGQRTKTNARTRKGPRKLIKSR) form a disordered region.

Belongs to the universal ribosomal protein uS13 family. As to quaternary structure, part of the 30S ribosomal subunit. Forms a loose heterodimer with protein S19. Forms two bridges to the 50S subunit in the 70S ribosome.

Located at the top of the head of the 30S subunit, it contacts several helices of the 16S rRNA. In the 70S ribosome it contacts the 23S rRNA (bridge B1a) and protein L5 of the 50S subunit (bridge B1b), connecting the 2 subunits; these bridges are implicated in subunit movement. Contacts the tRNAs in the A and P-sites. The protein is Small ribosomal subunit protein uS13 of Buchnera aphidicola subsp. Cinara cedri (strain Cc).